The primary structure comprises 350 residues: Dihydroorotate dehydrogenase (quinone) (350 aa).

Residues 59-63 and T83 contribute to the FMN site; that span reads AGLDK. K63 serves as a coordination point for substrate. 108–112 contacts substrate; it reads NRMGF. Residues N136 and N169 each coordinate FMN. N169 is a binding site for substrate. S172 serves as the catalytic Nucleophile. A substrate-binding site is contributed by N174. Residues K214 and T242 each contribute to the FMN site. Residue 243 to 244 participates in substrate binding; it reads NT. Residues G265, G294, and 315–316 each bind FMN; that span reads YS.

It belongs to the dihydroorotate dehydrogenase family. Type 2 subfamily. Monomer. The cofactor is FMN.

It is found in the cell membrane. It catalyses the reaction (S)-dihydroorotate + a quinone = orotate + a quinol. It participates in pyrimidine metabolism; UMP biosynthesis via de novo pathway; orotate from (S)-dihydroorotate (quinone route): step 1/1. Its function is as follows. Catalyzes the conversion of dihydroorotate to orotate with quinone as electron acceptor. This Aromatoleum aromaticum (strain DSM 19018 / LMG 30748 / EbN1) (Azoarcus sp. (strain EbN1)) protein is Dihydroorotate dehydrogenase (quinone).